The primary structure comprises 482 residues: Signal recognition particle protein (482 aa).

Residues 107–114, 189–193, and 247–250 contribute to the GTP site; these read GLQGTGKT, DTAGR, and TKLD. 2 disordered regions span residues 380-413 and 452-482; these read MTTE…TDVS and FGGQ…FGQL. The segment covering 452–468 has biased composition (gly residues); sequence FGGQPGPGFRGYRGGGG. The span at 469–482 shows a compositional bias: basic residues; that stretch reads KPKKKKKKKGFGQL.

The protein belongs to the GTP-binding SRP family. SRP54 subfamily. As to quaternary structure, part of the signal recognition particle protein translocation system, which is composed of SRP and FtsY.

It is found in the cytoplasm. The enzyme catalyses GTP + H2O = GDP + phosphate + H(+). Involved in targeting and insertion of nascent membrane proteins into the cytoplasmic membrane. Binds to the hydrophobic signal sequence of the ribosome-nascent chain (RNC) as it emerges from the ribosomes. The SRP-RNC complex is then targeted to the cytoplasmic membrane where it interacts with the SRP receptor FtsY. The protein is Signal recognition particle protein of Synechocystis sp. (strain ATCC 27184 / PCC 6803 / Kazusa).